The sequence spans 210 residues: Acetoin utilization protein AcuA (210 aa).

The N-acetyltransferase domain occupies 19 to 189; the sequence is VLIEGPISPE…ANCLMARIGK (171 aa).

This sequence belongs to the acetyltransferase family. Monomer.

The protein operates within ketone degradation; acetoin degradation. Part of the acuABC operon, which is possibly involved in the breakdown of acetoin and butanediol. Acts as an acetyltransferase inactivating acetyl-CoA synthetase AcsA via acetylation at a Lys residue. This chain is Acetoin utilization protein AcuA, found in Bacillus licheniformis (strain ATCC 14580 / DSM 13 / JCM 2505 / CCUG 7422 / NBRC 12200 / NCIMB 9375 / NCTC 10341 / NRRL NRS-1264 / Gibson 46).